A 69-amino-acid chain; its full sequence is Putative defensin-like protein 312 (69 aa).

Residues 1 to 19 (MSCFSFLVYFLLFIVTKMS) form the signal peptide. C45 and C57 are oxidised to a cystine.

This sequence belongs to the DEFL family.

It localises to the secreted. This chain is Putative defensin-like protein 312, found in Arabidopsis thaliana (Mouse-ear cress).